Reading from the N-terminus, the 291-residue chain is Formamidopyrimidine-DNA glycosylase (291 aa).

Residue Pro-2 is the Schiff-base intermediate with DNA of the active site. Glu-3 (proton donor) is an active-site residue. The active-site Proton donor; for beta-elimination activity is the Lys-58. Positions 100, 123, and 166 each coordinate DNA. Residues 257-291 form an FPG-type zinc finger; sequence SVYGREGKECSRCGMHIVRIVQSGRSSFYCPQCQK. Arg-281 acts as the Proton donor; for delta-elimination activity in catalysis.

This sequence belongs to the FPG family. As to quaternary structure, monomer. Zn(2+) serves as cofactor.

It catalyses the reaction Hydrolysis of DNA containing ring-opened 7-methylguanine residues, releasing 2,6-diamino-4-hydroxy-5-(N-methyl)formamidopyrimidine.. It carries out the reaction 2'-deoxyribonucleotide-(2'-deoxyribose 5'-phosphate)-2'-deoxyribonucleotide-DNA = a 3'-end 2'-deoxyribonucleotide-(2,3-dehydro-2,3-deoxyribose 5'-phosphate)-DNA + a 5'-end 5'-phospho-2'-deoxyribonucleoside-DNA + H(+). In terms of biological role, involved in base excision repair of DNA damaged by oxidation or by mutagenic agents. Acts as a DNA glycosylase that recognizes and removes damaged bases. Has a preference for oxidized purines, such as 7,8-dihydro-8-oxoguanine (8-oxoG). Has AP (apurinic/apyrimidinic) lyase activity and introduces nicks in the DNA strand. Cleaves the DNA backbone by beta-delta elimination to generate a single-strand break at the site of the removed base with both 3'- and 5'-phosphates. In Bartonella bacilliformis (strain ATCC 35685 / KC583 / Herrer 020/F12,63), this protein is Formamidopyrimidine-DNA glycosylase.